Consider the following 144-residue polypeptide: Augurin-B (144 aa).

An N-terminal signal peptide occupies residues methionine 1 to serine 18. A propeptide spanning residues isoleucine 19 to threonine 68 is cleaved from the precursor. Positions arginine 109 to tyrosine 144 are disordered. The segment covering aspartate 112–asparagine 122 has biased composition (basic and acidic residues).

The protein belongs to the augurin family.

It localises to the secreted. The protein localises to the cytoplasm. The protein resides in the apical cell membrane. Functionally, probable hormone. Required for the proper formation of the central nervous system by attenuating cell proliferation during development. In Danio rerio (Zebrafish), this protein is Augurin-B.